The following is a 75-amino-acid chain: Small ribosomal subunit protein bS16c (75 aa).

This sequence belongs to the bacterial ribosomal protein bS16 family.

The protein localises to the plastid. The protein resides in the chloroplast. The chain is Small ribosomal subunit protein bS16c from Cyanidium caldarium (Red alga).